Here is a 288-residue protein sequence, read N- to C-terminus: Capsid protein (288 aa).

Residue A2 is modified to N-acetylalanine; by host.

This sequence belongs to the high plain virus capsid family.

The protein localises to the virion. The polypeptide is Capsid protein (High plains virus (isolate Kansas 2004)).